Reading from the N-terminus, the 172-residue chain is Ribosome maturation factor RimM (172 aa).

The PRC barrel domain occupies 96-168 (EGEFYYHQII…RVDVELMEGL (73 aa)).

Belongs to the RimM family. As to quaternary structure, binds ribosomal protein uS19.

Its subcellular location is the cytoplasm. In terms of biological role, an accessory protein needed during the final step in the assembly of 30S ribosomal subunit, possibly for assembly of the head region. Essential for efficient processing of 16S rRNA. May be needed both before and after RbfA during the maturation of 16S rRNA. It has affinity for free ribosomal 30S subunits but not for 70S ribosomes. The chain is Ribosome maturation factor RimM from Streptococcus pyogenes serotype M6 (strain ATCC BAA-946 / MGAS10394).